Reading from the N-terminus, the 956-residue chain is Chromatin assembly factor 1 subunit A (956 aa).

Positions 1-49 (MLEELECGAPGARGAATAMDCKDRPAFPVKKLIQARLPFKRLNLVPKGK) are binds to PCNA. The tract at residues 1-314 (MLEELECGAP…QHSSTSPFPT (314 aa)) is binds to CBX1 chromo shadow domain. 2 disordered regions span residues 45-65 (VPKGKADDMSDDQGTSVQSKS) and 122-155 (DSNEQPDSLVDHNKLNSEASPSREAINGQREDTG). Polar residues predominate over residues 56 to 65 (DQGTSVQSKS). Phosphoserine occurs at positions 65, 123, 138, 141, and 143. Residue K182 forms a Glycyl lysine isopeptide (Lys-Gly) (interchain with G-Cter in SUMO1); alternate linkage. A Glycyl lysine isopeptide (Lys-Gly) (interchain with G-Cter in SUMO2); alternate cross-link involves residue K182. Positions 188 to 222 (VGCGGAGRRGDSQECSPRSCPELTSGPRMCPRKEQ) are disordered. Phosphoserine occurs at positions 206 and 224. Positions 233–246 (FKGKVPMVVLQDIL) match the PxVxL motif motif. Disordered regions lie at residues 250–432 (PPQI…KRLR) and 599–639 (DSDE…VPHG). 2 stretches are compositionally biased toward low complexity: residues 282–296 (LSHSSLSSPSSTSSP) and 307–317 (SSTSPFPTSTP). A Phosphoserine modification is found at S310. The segment covering 329 to 432 (STEKNKLRLQ…RKKEEEKRLR (104 aa)) has biased composition (basic and acidic residues). 2 stretches are compositionally biased toward acidic residues: residues 599–610 (DSDEEWEEEEPG) and 618–633 (GDDDDDMGEDEDEDDG). The interval 642–678 (SEDEGVTEECADPENHKVRQKLKAKEWDEFLAKGKRF) is necessary for homodimerization and competence for chromatin assembly. Residues 660-956 (RQKLKAKEWD…TLTASPLGAS (297 aa)) are binds to p60. T722 bears the Phosphothreonine mark. Residues 765-790 (LLSNHTGSPRSPSTTYLHTPTPSEDA) are disordered. A compositionally biased stretch (polar residues) spans 767-786 (SNHTGSPRSPSTTYLHTPTP). 3 positions are modified to phosphoserine: S772, S775, and S803. 2 disordered regions span residues 844–873 (SVPSAPKEDSGSVPSTGPSQGTPISLKRKS) and 933–956 (SGAGGGVGVDTGKATLTASPLGAS). Residues 855–866 (SVPSTGPSQGTP) are compositionally biased toward polar residues. At T865 the chain carries Phosphothreonine. Phosphoserine occurs at positions 868, 873, and 951.

Belongs to the CHAF1A family. Homodimer. Part of the CAF-1 complex that contains RBBP4, CHAF1B and CHAF1A. CHAF1A binds directly to CHAF1B. Only minor amounts of RBBP4 are complexed with CHAF1A and CHAF1B in G1 phase. Interacts with PCNA; the interaction is direct. Interacts (via the PxVxL motif) with CBX5; the interaction is direct. Interacts with MBD1. Interacts with histones H3.1, H3.2 and H3.1t.

The protein localises to the nucleus. Acts as a component of the histone chaperone complex chromatin assembly factor 1 (CAF-1), which assembles histone octamers onto DNA during replication and repair. CAF-1 performs the first step of the nucleosome assembly process, bringing newly synthesized histones H3 and H4 to replicating DNA; histones H2A/H2B can bind to this chromatin precursor subsequent to DNA replication to complete the histone octamer. It may play a role in heterochromatin maintenance in proliferating cells by bringing newly synthesized cbx proteins to heterochromatic DNA replication foci. This chain is Chromatin assembly factor 1 subunit A, found in Homo sapiens (Human).